Here is a 381-residue protein sequence, read N- to C-terminus: MNQFTLPVWVVAAAKSATNILIGNKFRDKERIDLPNNEKSISVPISSSALLDNGKRSLAVSHCQSGLPLDITRGVEIWAYIQLSKGGFQSKGKVRNGFPDWLDFHAGYGVGKFQSSGQPCISQFARDLLCINLYPLLPKGSSIKVEIILPEGKDRASKTSNEAFGVVDGLSLIGTQAEVQISASPDQLKNTKELLHHKCSEAKFDGCLTFVIGENGMDLAMKYGLPANQIIKTGNWLGPLLVAAAENGVKKLLLFGYHGKLIKLSGGVFHTHHHLADGRIEILTSIAFREGISFDLIELISKSTSVENALLTLEVSNPEAVSLIWSRMAKEIEIKSRSYVNRYLSSSMEIGSVLFDRKRQMRWAGLEGLKQINSLGLILKR.

Belongs to the CbiD family.

It catalyses the reaction Co-precorrin-5B + S-adenosyl-L-methionine = Co-precorrin-6A + S-adenosyl-L-homocysteine. It participates in cofactor biosynthesis; adenosylcobalamin biosynthesis; cob(II)yrinate a,c-diamide from sirohydrochlorin (anaerobic route): step 6/10. In terms of biological role, catalyzes the methylation of C-1 in cobalt-precorrin-5B to form cobalt-precorrin-6A. This is Cobalt-precorrin-5B C(1)-methyltransferase from Prochlorococcus marinus (strain NATL2A).